We begin with the raw amino-acid sequence, 270 residues long: Putative protein-disulfide oxidoreductase RT0103 (270 aa).

Residues 1 to 17 (MKNIFIVLIFLFLSSCA) form the signal peptide. Positions 71–264 (SVLTQDLHEQ…ISRAVDRALE (194 aa)) constitute a Thioredoxin domain. A disulfide bridge connects residues cysteine 117 and cysteine 120.

It belongs to the thioredoxin family. DsbA subfamily.

The protein localises to the periplasm. Functionally, may be required for disulfide bond formation in some proteins. In Rickettsia typhi (strain ATCC VR-144 / Wilmington), this protein is Putative protein-disulfide oxidoreductase RT0103.